Consider the following 141-residue polypeptide: uncharacterized protein (141 aa).

The region spanning 4 to 139 (RTQMMYDMET…LIELFSKLDK (136 aa)) is the HTH marR-type domain. The H-T-H motif DNA-binding region spans 53–76 (VTEFAPILEVSASHITAVTDALVE).

This is an uncharacterized protein from Bacillus subtilis (strain 168).